Reading from the N-terminus, the 562-residue chain is MFS-type efflux pump elcC (562 aa).

11 consecutive transmembrane segments (helical) span residues 50–70 (WVFL…GAAP), 80–100 (VVAG…VAEF), 111–131 (GMLG…GGAF), 139–159 (LCFY…FLLV), 184–204 (LYGL…TQWG), 215–235 (IIAL…IEIW), 257–277 (IFSF…PLWF), 288–308 (SGIH…AAGG), 309–329 (MVFG…LAAV), 351–371 (VLYG…IQAA), and 383–403 (VVIF…QNVF). Asn-448 carries N-linked (GlcNAc...) asparagine glycosylation. A helical membrane pass occupies residues 455-475 (FYVAVATAGLSMAGSILIPWL). A disordered region spans residues 515–562 (EIASEDSQSSDIEKVPRNNEVSTYDSQTSEVEKSSVGSTNRKVESIRN). The segment covering 533-554 (NEVSTYDSQTSEVEKSSVGSTN) has biased composition (polar residues).

Belongs to the major facilitator superfamily. TCR/Tet family.

Its subcellular location is the cell membrane. In terms of biological role, MFS-type efflux pump; part of the gene cluster that mediates the biosynthesis of elsinochrome C, a perelyenequinone phytotoxin structurally similar to cercosporin. The chain is MFS-type efflux pump elcC from Phaeosphaeria nodorum (strain SN15 / ATCC MYA-4574 / FGSC 10173) (Glume blotch fungus).